The chain runs to 510 residues: G-protein coupled receptor dmsr-1 (510 aa).

The Extracellular segment spans residues 1 to 35 (MEFTECKTTFIHLPDKSFLYDVFVSVYNFYHPIHA). The chain crosses the membrane as a helical span at residues 36 to 56 (YLSIFLCVLGTIANFCNIVVL). The Cytoplasmic portion of the chain corresponds to 57 to 64 (TRRTMRTP). Residues 65–85 (VNMILTAMASCDTVVLFSNLI) form a helical membrane-spanning segment. The Extracellular portion of the chain corresponds to 86–107 (YTTHYSFVAFKFCHPKHWSYSW). A helical transmembrane segment spans residues 108 to 128 (ALFLIAHAHLSLVAHSSSVWL). Residues 129–155 (SVMLALVRYVTLRSRGNMGGMQVTLRH) are Cytoplasmic-facing. Residues 156–176 (SYYAVAVTVSLVAVLNAPNFL) form a helical membrane-spanning segment. Residues 177 to 223 (NYKINEQPLNETCTDLDPMFWNSPAYLPGIADIAKANSCLVFRLSYW) lie on the Extracellular side of the membrane. Asn-186 carries an N-linked (GlcNAc...) asparagine glycan. A helical membrane pass occupies residues 224–244 (ISGMVFKVLPCALLSLFVWLL). The Cytoplasmic portion of the chain corresponds to 245–307 (LRILREVREN…GERVDRTTHM (63 aa)). Residues 308–328 (LLAIVAVMLVTELPQGIMAVL) form a helical membrane-spanning segment. Residues 329–343 (SGMCSEEFRIYIYNN) are Extracellular-facing. A helical transmembrane segment spans residues 344-364 (LGDILDLFSLCGSCCSFIIYC). The Cytoplasmic segment spans residues 365 to 510 (SMSGQFRNEF…DGIRGHFQNI (146 aa)). Residues 452-510 (GCDSITPCSPMPTSFPSSPLPPIRSGEDESTDETSHLLNSSGPNSTASADGIRGHFQNI) form a disordered region. Over residues 487-499 (HLLNSSGPNSTAS) the composition is skewed to polar residues.

It belongs to the G-protein coupled receptor 1 family. Expressed in head neurons including the RID neuron and the paired AIY neurons, and in tail neurons including the paired PHA and PHB neurons. Not expressed in AVE and AVA neurons.

Its subcellular location is the cell membrane. In terms of biological role, G-protein coupled receptor. G-protein coupled receptor for flp-13 RFamide neuropeptides in vitro. Upon activation by flp-13 RFamide neuropeptides, promotes sleep in response to cellular stress also known as stress-induced sleep (SIS), probably by inhibiting the activity of wake-promoting neurons. This Caenorhabditis elegans protein is G-protein coupled receptor dmsr-1.